We begin with the raw amino-acid sequence, 162 residues long: Protein hcp1 (162 aa).

This sequence belongs to the hcp1 family. Hexamer. Three hcp1 monomers form two closely related hexameric rings with a 40 Angstrom internal diameter.

The protein resides in the secreted. Functionally, required for assembly of the protein secretion apparatus HSI-I. Actively secreted during chronic infection of cystic fibrosis patients. The protein is Protein hcp1 (hcp1) of Pseudomonas aeruginosa (strain ATCC 15692 / DSM 22644 / CIP 104116 / JCM 14847 / LMG 12228 / 1C / PRS 101 / PAO1).